We begin with the raw amino-acid sequence, 104 residues long: Large ribosomal subunit protein eL42 (104 aa).

Belongs to the eukaryotic ribosomal protein eL42 family. As to quaternary structure, component of the large ribosomal subunit. Mature ribosomes consist of a small (40S) and a large (60S) subunit. The 40S subunit contains about 32 different proteins and 1 molecule of RNA (18S). The 60S subunit contains about 42 different proteins and 3 molecules of RNA (28S, 5.8S and 5S).

The protein resides in the cytoplasm. Functionally, component of the ribosome, a large ribonucleoprotein complex responsible for the synthesis of proteins in the cell. The small ribosomal subunit (SSU) binds messenger RNAs (mRNAs) and translates the encoded message by selecting cognate aminoacyl-transfer RNA (tRNA) molecules. The large subunit (LSU) contains the ribosomal catalytic site termed the peptidyl transferase center (PTC), which catalyzes the formation of peptide bonds, thereby polymerizing the amino acids delivered by tRNAs into a polypeptide chain. The nascent polypeptides leave the ribosome through a tunnel in the LSU and interact with protein factors that function in enzymatic processing, targeting, and the membrane insertion of nascent chains at the exit of the ribosomal tunnel. The protein is Large ribosomal subunit protein eL42 of Plasmodium falciparum (isolate 3D7).